The sequence spans 347 residues: Protein RecA (347 aa).

Position 65 to 72 (65 to 72 (GPESSGKT)) interacts with ATP. A compositionally biased stretch (basic and acidic residues) spans 327-336 (KFEPTELSRE). The interval 327-347 (KFEPTELSREEGDEDTLEDTM) is disordered. Residues 337 to 347 (EGDEDTLEDTM) are compositionally biased toward acidic residues.

The protein belongs to the RecA family.

It is found in the cytoplasm. Its function is as follows. Can catalyze the hydrolysis of ATP in the presence of single-stranded DNA, the ATP-dependent uptake of single-stranded DNA by duplex DNA, and the ATP-dependent hybridization of homologous single-stranded DNAs. It interacts with LexA causing its activation and leading to its autocatalytic cleavage. The polypeptide is Protein RecA (Xylella fastidiosa (strain 9a5c)).